The sequence spans 218 residues: Small ribosomal subunit protein uS3c (218 aa).

Positions 47–118 constitute a KH type-2 domain; the sequence is VQKNMKTSSG…KLNIAITRIE (72 aa).

This sequence belongs to the universal ribosomal protein uS3 family. Part of the 30S ribosomal subunit.

The protein localises to the plastid. Its subcellular location is the chloroplast. The protein is Small ribosomal subunit protein uS3c (rps3) of Lactuca sativa (Garden lettuce).